The following is a 249-amino-acid chain: (S)-1-Phenylethanol dehydrogenase (249 aa).

NAD(+) is bound by residues 17–19 (NGI), Asp38, 61–63 (CDV), Asn89, and Tyr93. Ser141 contacts substrate. The active-site Proton acceptor is Tyr154. Residues Lys158, 184–187 (PSLV), and Thr191 contribute to the NAD(+) site.

This sequence belongs to the short-chain dehydrogenases/reductases (SDR) family. Homotetramer.

It carries out the reaction (S)-1-phenylethanol + NAD(+) = acetophenone + NADH + H(+). Functionally, catalyzes the NAD-dependent stereospecific oxidation of (S)-1-phenylethanol to acetophenone in the degradation of ethylbenzene. In Aromatoleum aromaticum (strain DSM 19018 / LMG 30748 / EbN1) (Azoarcus sp. (strain EbN1)), this protein is (S)-1-Phenylethanol dehydrogenase (ped).